Reading from the N-terminus, the 125-residue chain is Small ribosomal subunit protein eS8 (125 aa).

Residues 1–30 (MTIFQGRATRKPSGGKLRPNHSKRRYELGR) form a disordered region.

Belongs to the eukaryotic ribosomal protein eS8 family. Part of the 30S ribosomal subunit.

This Picrophilus torridus (strain ATCC 700027 / DSM 9790 / JCM 10055 / NBRC 100828 / KAW 2/3) protein is Small ribosomal subunit protein eS8.